Here is a 907-residue protein sequence, read N- to C-terminus: Catenin alpha-1 (907 aa).

Position 2 is an N-acetylthreonine (Thr-2). The segment at 2–228 (TAVHAGNINF…PILYTASQAC (227 aa)) is involved in homodimerization. Lys-57 is covalently cross-linked (Glycyl lysine isopeptide (Lys-Gly) (interchain with G-Cter in SUMO2)). The tract at residues 97-148 (VRKQGDLMKSAAGEFADDPCSSVKRGNMVRAARALLSAVTRLLILADMADVY) is interaction with JUP and CTNNB1. A phosphoserine mark is found at Ser-264, Ser-268, Ser-296, and Ser-298. Residues 326–395 (TRDDRRERIV…AVMDHVSDSF (70 aa)) form an interaction with alpha-actinin region. Position 635 is a phosphothreonine (Thr-635). Ser-642 carries the post-translational modification Phosphoserine. Residue Thr-646 is modified to Phosphothreonine. Phosphoserine occurs at positions 653 and 656. Thr-659 carries the post-translational modification Phosphothreonine. Lys-798 is covalently cross-linked (Glycyl lysine isopeptide (Lys-Gly) (interchain with G-Cter in SUMO2)). Ser-852 carries the post-translational modification Phosphoserine. Basic and acidic residues predominate over residues 865–881 (PEKKPLVKREKQDETQT). Residues 865 to 895 (PEKKPLVKREKQDETQTKIKRASQKKHVNPV) are disordered. The segment covering 882–892 (KIKRASQKKHV) has biased composition (basic residues).

Belongs to the vinculin/alpha-catenin family. Monomer and homodimer; the monomer preferentially binds to CTNNB1 and the homodimer to actin. Component of an cadherin:catenin adhesion complex composed of at least of CDH26, beta-catenin/CTNNB1, alpha-catenin/CTNNA1 and p120 catenin/CTNND1. Possible component of an E-cadherin/ catenin adhesion complex together with E-cadherin/CDH1 and beta-catenin/CTNNB1 or gamma-catenin/JUP; the complex is located to adherens junctions. The stable association of CTNNA1 is controversial as CTNNA1 was shown not to bind to F-actin when assembled in the complex. Alternatively, the CTNNA1-containing complex may be linked to F-actin by other proteins such as LIMA1. Binds AFDN and F-actin. Interacts with ARHGAP21. Interacts with AJUBA. Interacts with LIMA1. Interacts with vinculin/VCL. Interacts with TJP2/ZO2 (via N-terminus). Interacts with TJP1/ZO1 (via N-terminus). Post-translationally, sumoylated. In terms of processing, phosphorylation seems to contribute to the strength of cell-cell adhesion rather than to the basic capacity for cell-cell adhesion.

It is found in the cytoplasm. It localises to the cytoskeleton. The protein resides in the cell junction. The protein localises to the adherens junction. Its subcellular location is the cell membrane. It is found in the nucleus. In terms of biological role, associates with the cytoplasmic domain of a variety of cadherins. The association of catenins to cadherins produces a complex which is linked to the actin filament network, and which seems to be of primary importance for cadherins cell-adhesion properties. Can associate with both E- and N-cadherins. Originally believed to be a stable component of E-cadherin/catenin adhesion complexes and to mediate the linkage of cadherins to the actin cytoskeleton at adherens junctions. In contrast, cortical actin was found to be much more dynamic than E-cadherin/catenin complexes and CTNNA1 was shown not to bind to F-actin when assembled in the complex suggesting a different linkage between actin and adherens junctions components. The homodimeric form may regulate actin filament assembly and inhibit actin branching by competing with the Arp2/3 complex for binding to actin filaments. Involved in the regulation of WWTR1/TAZ, YAP1 and TGFB1-dependent SMAD2 and SMAD3 nuclear accumulation. May play a crucial role in cell differentiation. This is Catenin alpha-1 from Oryctolagus cuniculus (Rabbit).